Reading from the N-terminus, the 372-residue chain is Flagellar P-ring protein (372 aa).

The N-terminal stretch at 1–26 (MNLSSLPFRLLAAAVALCAIAAPASA) is a signal peptide.

This sequence belongs to the FlgI family. The basal body constitutes a major portion of the flagellar organelle and consists of four rings (L,P,S, and M) mounted on a central rod.

It is found in the periplasm. The protein resides in the bacterial flagellum basal body. Its function is as follows. Assembles around the rod to form the L-ring and probably protects the motor/basal body from shearing forces during rotation. In Xanthomonas campestris pv. campestris (strain B100), this protein is Flagellar P-ring protein.